The sequence spans 371 residues: MRSLPMLWFFFCVTVLIIGYFIYGKIIEKIFVINPKRQTPAYQVNDGVDYMPMSKTKIWLIQLLNIAGTGPIFGPILGALYGPVAMLWIVIGCIFAGAVHDYFCGMLSIRHGGATMPYLAGKFLGRPVKVFINTLALVLLLLVGVVFVASPAQLMGTITMDVFGVSQGALVLGDAEAVHHSVEAGGIKVWGMDKATVVAVWTAIIFAYYILATLLPVDKIIGRIYPLFGALLLFMSVGMVYGLVVSHFSATDPIEFFRTINADGEGLTWAKFTQNFQVKGDVPIWPLLFLTISCGALSGFHATQTPLMARCTENESEGRFIFYGAMITEGVIALVWCMVGLAFYENPQALQDAISAGCSMLKLCMIVRYIS.

8 helical membrane passes run 4 to 24, 60 to 82, 87 to 109, 130 to 150, 197 to 217, 224 to 244, 282 to 302, and 320 to 340; these read LPML…FIYG, LIQL…ALYG, LWIV…MLSI, VFIN…FVAS, VVAV…LLPV, IYPL…YGLV, VPIW…GFHA, and FIFY…CMVG.

This sequence belongs to the peptide transporter carbon starvation (CstA) (TC 2.A.114) family.

Its subcellular location is the cell membrane. This is an uncharacterized protein from Haemophilus influenzae (strain ATCC 51907 / DSM 11121 / KW20 / Rd).